The chain runs to 160 residues: uncharacterized protein (160 aa).

An N-terminal signal peptide occupies residues 1 to 25; it reads MKVTLLLLLIAVLLLLLIFMKVCKQ.

This is an uncharacterized protein from Invertebrate iridescent virus 6 (IIV-6).